We begin with the raw amino-acid sequence, 293 residues long: Cell division protein FtsQ (293 aa).

Residues 1-29 (MSQVRSKSQQGKRQAKPQEVVPATILTEQ) lie on the Cytoplasmic side of the membrane. A helical membrane pass occupies residues 30–52 (LSTYAFGTVTAGAVMVAVAAWMG). The Periplasmic portion of the chain corresponds to 53 to 293 (GSLASIDERI…SQIDDKSGGA (241 aa)). In terms of domain architecture, POTRA spans 75-144 (FTVTKISIEG…NDIWILAENR (70 aa)).

Belongs to the FtsQ/DivIB family. FtsQ subfamily.

The protein resides in the cell inner membrane. In terms of biological role, essential cell division protein. The chain is Cell division protein FtsQ from Hirschia baltica (strain ATCC 49814 / DSM 5838 / IFAM 1418).